The chain runs to 160 residues: Oligoribonuclease (160 aa).

The Exonuclease domain maps to 8-158; sequence LIWIDLEMTG…YNKLKKKTLI (151 aa). The active site involves Y129.

The protein belongs to the oligoribonuclease family.

It is found in the cytoplasm. 3'-to-5' exoribonuclease specific for small oligoribonucleotides. The chain is Oligoribonuclease (orn) from Buchnera aphidicola subsp. Baizongia pistaciae (strain Bp).